The sequence spans 54 residues: Small ribosomal subunit protein uS14 (54 aa).

Cysteine 19, cysteine 22, cysteine 37, and cysteine 40 together coordinate Zn(2+).

This sequence belongs to the universal ribosomal protein uS14 family. Zinc-binding uS14 subfamily. As to quaternary structure, part of the 30S ribosomal subunit. Zn(2+) is required as a cofactor.

Functionally, binds 16S rRNA, required for the assembly of 30S particles. The sequence is that of Small ribosomal subunit protein uS14 from Saccharolobus solfataricus (strain ATCC 35092 / DSM 1617 / JCM 11322 / P2) (Sulfolobus solfataricus).